The primary structure comprises 213 residues: Octanoyltransferase (213 aa).

One can recognise a BPL/LPL catalytic domain in the interval 28-203 (GTSPETLLLL…RFPFLLDERL (176 aa)). Substrate-binding positions include 66–73 (RGGDVTFH), 133–135 (SIG), and 146–148 (GFA). The Acyl-thioester intermediate role is filled by Cys164.

It belongs to the LipB family.

It localises to the cytoplasm. It carries out the reaction octanoyl-[ACP] + L-lysyl-[protein] = N(6)-octanoyl-L-lysyl-[protein] + holo-[ACP] + H(+). It participates in protein modification; protein lipoylation via endogenous pathway; protein N(6)-(lipoyl)lysine from octanoyl-[acyl-carrier-protein]: step 1/2. In terms of biological role, catalyzes the transfer of endogenously produced octanoic acid from octanoyl-acyl-carrier-protein onto the lipoyl domains of lipoate-dependent enzymes. Lipoyl-ACP can also act as a substrate although octanoyl-ACP is likely to be the physiological substrate. This Geobacter metallireducens (strain ATCC 53774 / DSM 7210 / GS-15) protein is Octanoyltransferase.